Reading from the N-terminus, the 484-residue chain is tRNA-2-methylthio-N(6)-dimethylallyladenosine synthase (484 aa).

Positions 29–149 constitute an MTTase N-terminal domain; it reads GVFHIHTLGC…LPKLLDQNRA (121 aa). Residues cysteine 38, cysteine 78, cysteine 112, cysteine 186, cysteine 190, and cysteine 193 each contribute to the [4Fe-4S] cluster site. Positions 172–401 constitute a Radical SAM core domain; that stretch reads RASRISSWVA…VALQEQITEE (230 aa). Positions 404-474 constitute a TRAM domain; it reads ATFEGRDVEV…RHNLLADPDV (71 aa).

The protein belongs to the methylthiotransferase family. MiaB subfamily. Monomer. It depends on [4Fe-4S] cluster as a cofactor.

It is found in the cytoplasm. It catalyses the reaction N(6)-dimethylallyladenosine(37) in tRNA + (sulfur carrier)-SH + AH2 + 2 S-adenosyl-L-methionine = 2-methylsulfanyl-N(6)-dimethylallyladenosine(37) in tRNA + (sulfur carrier)-H + 5'-deoxyadenosine + L-methionine + A + S-adenosyl-L-homocysteine + 2 H(+). Its function is as follows. Catalyzes the methylthiolation of N6-(dimethylallyl)adenosine (i(6)A), leading to the formation of 2-methylthio-N6-(dimethylallyl)adenosine (ms(2)i(6)A) at position 37 in tRNAs that read codons beginning with uridine. The sequence is that of tRNA-2-methylthio-N(6)-dimethylallyladenosine synthase from Bifidobacterium longum (strain DJO10A).